A 755-amino-acid polypeptide reads, in one-letter code: Atypical kinase coq-8, mitochondrial (755 aa).

Residues 57-78 (QDVDPLKEPNKTNAPLLSPTLP) are disordered. Residues 67–78 (KTNAPLLSPTLP) show a composition bias toward polar residues. ATP-binding positions include 435–443 (FACASIGQV) and Lys457. Asp587 (proton acceptor) is an active-site residue.

The protein belongs to the protein kinase superfamily. ADCK protein kinase family.

It localises to the mitochondrion. Its pathway is cofactor biosynthesis; ubiquinone biosynthesis. Functionally, atypical kinase involved in the biosynthesis of coenzyme Q, also named ubiquinone, an essential lipid-soluble electron transporter for aerobic cellular respiration. Its substrate specificity is still unclear: may act as a protein kinase that mediates phosphorylation of coq-3. According to other reports, acts as a small molecule kinase, possibly a lipid kinase that phosphorylates a prenyl lipid in the ubiquinone biosynthesis pathway, as suggested by its ability to bind coenzyme Q lipid intermediates. This is Atypical kinase coq-8, mitochondrial (coq-8) from Caenorhabditis elegans.